Reading from the N-terminus, the 375-residue chain is Succinyl-diaminopimelate desuccinylase (375 aa).

Histidine 66 is a binding site for Zn(2+). Aspartate 68 is a catalytic residue. Aspartate 99 contributes to the Zn(2+) binding site. Catalysis depends on glutamate 133, which acts as the Proton acceptor. Positions 134, 162, and 348 each coordinate Zn(2+).

The protein belongs to the peptidase M20A family. DapE subfamily. Homodimer. Zn(2+) serves as cofactor. Requires Co(2+) as cofactor.

The enzyme catalyses N-succinyl-(2S,6S)-2,6-diaminopimelate + H2O = (2S,6S)-2,6-diaminopimelate + succinate. It participates in amino-acid biosynthesis; L-lysine biosynthesis via DAP pathway; LL-2,6-diaminopimelate from (S)-tetrahydrodipicolinate (succinylase route): step 3/3. Functionally, catalyzes the hydrolysis of N-succinyl-L,L-diaminopimelic acid (SDAP), forming succinate and LL-2,6-diaminopimelate (DAP), an intermediate involved in the bacterial biosynthesis of lysine and meso-diaminopimelic acid, an essential component of bacterial cell walls. The chain is Succinyl-diaminopimelate desuccinylase from Escherichia coli O17:K52:H18 (strain UMN026 / ExPEC).